Reading from the N-terminus, the 137-residue chain is MQNLLKNLAASLGRKPFVADKQGVYRLTIDKHLVMLAPHGSELVLRTPIDAPMLREGNNVNVTLLRSLMQQALAWAKRYPQTLVLDDCGQLVLEARLRLQELDTHGLQEVINKQLALLEHLIPQLTPFSVASRVGWN.

In terms of assembly, interacts with SycN to form a complex which specifically binds to YopN.

It is found in the cytoplasm. It localises to the cell inner membrane. In terms of biological role, functions as a specific chaperone for YopN. It could facilitate the secretion and the subsequent translocation of YopN. The sequence is that of Chaperone protein YscB (yscB) from Yersinia pestis.